A 185-amino-acid chain; its full sequence is Elongation factor P (185 aa).

It belongs to the elongation factor P family.

It is found in the cytoplasm. It participates in protein biosynthesis; polypeptide chain elongation. Its function is as follows. Involved in peptide bond synthesis. Stimulates efficient translation and peptide-bond synthesis on native or reconstituted 70S ribosomes in vitro. Probably functions indirectly by altering the affinity of the ribosome for aminoacyl-tRNA, thus increasing their reactivity as acceptors for peptidyl transferase. This Streptococcus equi subsp. equi (strain 4047) protein is Elongation factor P.